Consider the following 62-residue polypeptide: Short neurotoxin 2 (62 aa).

Residues 1-20 form a disordered region; it reads MTCYNQQSSEAKTTTTCSGG. Disulfide bonds link cysteine 3–cysteine 24, cysteine 17–cysteine 41, cysteine 43–cysteine 54, and cysteine 55–cysteine 60.

Belongs to the three-finger toxin family. Short-chain subfamily. Type I alpha-neurotoxin sub-subfamily. As to expression, expressed by the venom gland.

The protein localises to the secreted. Binds to muscle nicotinic acetylcholine receptor (nAChR) and inhibit acetylcholine from binding to the receptor, thereby impairing neuromuscular transmission. The chain is Short neurotoxin 2 from Oxyuranus scutellatus scutellatus (Australian taipan).